A 448-amino-acid polypeptide reads, in one-letter code: Mitochondrial distribution and morphology protein 10 (448 aa).

It belongs to the MDM10 family. In terms of assembly, component of the ER-mitochondria encounter structure (ERMES) or MDM complex, composed of MMM1, MDM10, MDM12 and MDM34. Associates with the mitochondrial outer membrane sorting assembly machinery SAM(core) complex.

The protein localises to the mitochondrion outer membrane. Functionally, component of the ERMES/MDM complex, which serves as a molecular tether to connect the endoplasmic reticulum and mitochondria. Components of this complex are involved in the control of mitochondrial shape and protein biogenesis and may function in phospholipid exchange. MDM10 is involved in the late assembly steps of the general translocase of the mitochondrial outer membrane (TOM complex). Functions in the TOM40-specific route of the assembly of outer membrane beta-barrel proteins, including the association of TOM40 with the receptor TOM22 and small TOM proteins. Can associate with the SAM(core) complex as well as the MDM12-MMM1 complex, both involved in late steps of the major beta-barrel assembly pathway, that is responsible for biogenesis of all outer membrane beta-barrel proteins. May act as a switch that shuttles between both complexes and channels precursor proteins into the TOM40-specific pathway. Plays a role in mitochondrial morphology and in the inheritance of mitochondria. The sequence is that of Mitochondrial distribution and morphology protein 10 from Zygosaccharomyces rouxii (strain ATCC 2623 / CBS 732 / NBRC 1130 / NCYC 568 / NRRL Y-229).